We begin with the raw amino-acid sequence, 81 residues long: Small ribosomal subunit protein bS16 (81 aa).

This sequence belongs to the bacterial ribosomal protein bS16 family.

The chain is Small ribosomal subunit protein bS16 from Treponema denticola (strain ATCC 35405 / DSM 14222 / CIP 103919 / JCM 8153 / KCTC 15104).